A 524-amino-acid chain; its full sequence is Beta-glucosidase 21 (524 aa).

Residues 1–24 (MALQKFPLMGLLLLLTILVSVTTA) form the signal peptide. Q55 provides a ligand contact to a beta-D-glucoside. N-linked (GlcNAc...) asparagine glycosylation occurs at N61. A beta-D-glucoside contacts are provided by residues H158 and 203-204 (NE). E204 functions as the Proton donor in the catalytic mechanism. A disulfide bridge connects residues C223 and C230. A beta-D-glucoside-binding positions include Y346, E418, W468, 475–476 (EW), and F484. The active-site Nucleophile is the E418. An N-linked (GlcNAc...) asparagine glycan is attached at N494. Positions 521–524 (RDEL) match the Prevents secretion from ER motif.

Belongs to the glycosyl hydrolase 1 family. As to quaternary structure, component of the PYK10 complex, at least composed of PYK10/BGLU23, BGLU21, BGLU22, JAL22, JAL23, PBP1/JAL30, PBP2/JAL31, JAL32, JAL33, JAL34, JAL35, GLL22 and GLL23. Expressed exclusively in roots.

It is found in the endoplasmic reticulum lumen. The catalysed reaction is Hydrolysis of terminal, non-reducing beta-D-glucosyl residues with release of beta-D-glucose.. Activated upon binding to PBP1 or PBP2. Beta-D-glucosidase active on scopolin &gt;&gt; esculin &gt;&gt; 4-MU-glucoside &gt; DIMBOA-glucoside. No activity with pNP-glucoside, oNP-glucoside and sinigrin as substrates. This chain is Beta-glucosidase 21, found in Arabidopsis thaliana (Mouse-ear cress).